We begin with the raw amino-acid sequence, 115 residues long: NADH-ubiquinone oxidoreductase chain 3 (115 aa).

3 helical membrane-spanning segments follow: residues 4–24, 55–75, and 87–107; these read LVALSVNIALSMCLITIAFWL, FFLVAITFLLFDLEIALLLPL, and MMLTSFILVSVLALGLAYEWM.

Belongs to the complex I subunit 3 family. As to quaternary structure, core subunit of respiratory chain NADH dehydrogenase (Complex I) which is composed of 45 different subunits. Interacts with TMEM186. Interacts with TMEM242.

Its subcellular location is the mitochondrion inner membrane. The catalysed reaction is a ubiquinone + NADH + 5 H(+)(in) = a ubiquinol + NAD(+) + 4 H(+)(out). Functionally, core subunit of the mitochondrial membrane respiratory chain NADH dehydrogenase (Complex I) which catalyzes electron transfer from NADH through the respiratory chain, using ubiquinone as an electron acceptor. Essential for the catalytic activity of complex I. In Habromys lophurus (Crested-tailed deer mouse), this protein is NADH-ubiquinone oxidoreductase chain 3.